Reading from the N-terminus, the 249-residue chain is Putative TrmH family tRNA/rRNA methyltransferase (249 aa).

3 residues coordinate S-adenosyl-L-methionine: glycine 196, isoleucine 216, and leucine 225.

Belongs to the class IV-like SAM-binding methyltransferase superfamily. RNA methyltransferase TrmH family.

In Staphylococcus saprophyticus subsp. saprophyticus (strain ATCC 15305 / DSM 20229 / NCIMB 8711 / NCTC 7292 / S-41), this protein is Putative TrmH family tRNA/rRNA methyltransferase.